The sequence spans 447 residues: Tubulin beta chain (447 aa).

The GTP site is built by Gln11, Glu69, Ser138, Gly142, Thr143, Gly144, Asn204, and Asn226. Glu69 provides a ligand contact to Mg(2+). Residues 424 to 447 (QYQDAGVDEEEEEYEEEAPLEGEE) are disordered. A compositionally biased stretch (acidic residues) spans 429 to 447 (GVDEEEEEYEEEAPLEGEE).

It belongs to the tubulin family. In terms of assembly, dimer of alpha and beta chains. A typical microtubule is a hollow water-filled tube with an outer diameter of 25 nm and an inner diameter of 15 nM. Alpha-beta heterodimers associate head-to-tail to form protofilaments running lengthwise along the microtubule wall with the beta-tubulin subunit facing the microtubule plus end conferring a structural polarity. Microtubules usually have 13 protofilaments but different protofilament numbers can be found in some organisms and specialized cells. Requires Mg(2+) as cofactor.

The protein localises to the cytoplasm. It localises to the cytoskeleton. Its function is as follows. Tubulin is the major constituent of microtubules, a cylinder consisting of laterally associated linear protofilaments composed of alpha- and beta-tubulin heterodimers. Microtubules grow by the addition of GTP-tubulin dimers to the microtubule end, where a stabilizing cap forms. Below the cap, tubulin dimers are in GDP-bound state, owing to GTPase activity of alpha-tubulin. This is Tubulin beta chain (tub-2) from Neurospora crassa (strain ATCC 24698 / 74-OR23-1A / CBS 708.71 / DSM 1257 / FGSC 987).